Here is a 226-residue protein sequence, read N- to C-terminus: Putative ABC transporter ATP-binding protein BH02760 (226 aa).

An ABC transporter domain is found at 4–222 (IKFDKVTQVF…IPLVAIKEYI (219 aa)). ATP is bound at residue 35–42 (GANGSGKS).

It belongs to the ABC transporter superfamily.

The protein localises to the cell inner membrane. In terms of biological role, probably part of an ABC transporter complex. Responsible for energy coupling to the transport system. In Bartonella henselae (strain ATCC 49882 / DSM 28221 / CCUG 30454 / Houston 1) (Rochalimaea henselae), this protein is Putative ABC transporter ATP-binding protein BH02760.